The following is a 123-amino-acid chain: Dormancy-associated protein homolog 4 (123 aa).

Positions 7-86 (LWDETVAGPT…NPGTPLTPGT (80 aa)) are disordered. Positions 30–46 (LSTVRSSPPSLSSDQVT) are enriched in low complexity. Polar residues-rich tracts occupy residues 47–58 (RSIMVTKGNNNV) and 71–80 (PTCSSSNPGT). Position 74 is a phosphoserine (S74).

It belongs to the DRM1/ARP family.

The chain is Dormancy-associated protein homolog 4 from Arabidopsis thaliana (Mouse-ear cress).